The following is a 121-amino-acid chain: Fumarate reductase subunit D (121 aa).

The next 3 membrane-spanning stretches (helical) occupy residues 22-42 (GVWFAMITPVTVLLMGILLPL), 57-77 (AFVSHPIGGAFTVLSLSLPMW), and 100-120 (YACYLAAALVTVLATVWVIQL).

Belongs to the FrdD family. In terms of assembly, part of an enzyme complex containing four subunits: a flavoprotein (FrdA), an iron-sulfur protein (FrdB), and two hydrophobic anchor proteins (FrdC and FrdD).

It is found in the cell inner membrane. Its function is as follows. Anchors the catalytic components of the fumarate reductase complex to the cell membrane, binds quinones. The chain is Fumarate reductase subunit D from Shewanella putrefaciens (strain CN-32 / ATCC BAA-453).